The following is a 344-amino-acid chain: Ferrochelatase (344 aa).

Positions 214 and 295 each coordinate Fe cation.

Belongs to the ferrochelatase family.

The protein localises to the cytoplasm. It carries out the reaction heme b + 2 H(+) = protoporphyrin IX + Fe(2+). It functions in the pathway porphyrin-containing compound metabolism; protoheme biosynthesis; protoheme from protoporphyrin-IX: step 1/1. In terms of biological role, catalyzes the ferrous insertion into protoporphyrin IX. The protein is Ferrochelatase of Rhizobium leguminosarum bv. trifolii (strain WSM2304).